A 284-amino-acid polypeptide reads, in one-letter code: 2-dehydro-3-deoxyphosphooctonate aldolase (284 aa).

This sequence belongs to the KdsA family.

Its subcellular location is the cytoplasm. The enzyme catalyses D-arabinose 5-phosphate + phosphoenolpyruvate + H2O = 3-deoxy-alpha-D-manno-2-octulosonate-8-phosphate + phosphate. It functions in the pathway carbohydrate biosynthesis; 3-deoxy-D-manno-octulosonate biosynthesis; 3-deoxy-D-manno-octulosonate from D-ribulose 5-phosphate: step 2/3. Its pathway is bacterial outer membrane biogenesis; lipopolysaccharide biosynthesis. The chain is 2-dehydro-3-deoxyphosphooctonate aldolase from Haemophilus influenzae (strain PittEE).